The primary structure comprises 477 residues: Probable cytosolic Fe-S cluster assembly factor GM20417 (477 aa).

C23, C68, C71, C74, C187, C243, C395, and C399 together coordinate [4Fe-4S] cluster.

Belongs to the NARF family.

Its function is as follows. Component of the cytosolic iron-sulfur (Fe/S) protein assembly machinery. Required for maturation of extramitochondrial Fe/S proteins. This is Probable cytosolic Fe-S cluster assembly factor GM20417 from Drosophila sechellia (Fruit fly).